A 354-amino-acid chain; its full sequence is UDP-3-O-acylglucosamine N-acyltransferase (354 aa).

The active-site Proton acceptor is H257. Residues 335–354 (AQQVSKSKLRGRNPGGKQND) are disordered.

It belongs to the transferase hexapeptide repeat family. LpxD subfamily. As to quaternary structure, homotrimer.

The catalysed reaction is a UDP-3-O-[(3R)-3-hydroxyacyl]-alpha-D-glucosamine + a (3R)-hydroxyacyl-[ACP] = a UDP-2-N,3-O-bis[(3R)-3-hydroxyacyl]-alpha-D-glucosamine + holo-[ACP] + H(+). It functions in the pathway bacterial outer membrane biogenesis; LPS lipid A biosynthesis. In terms of biological role, catalyzes the N-acylation of UDP-3-O-acylglucosamine using 3-hydroxyacyl-ACP as the acyl donor. Is involved in the biosynthesis of lipid A, a phosphorylated glycolipid that anchors the lipopolysaccharide to the outer membrane of the cell. The sequence is that of UDP-3-O-acylglucosamine N-acyltransferase from Rhizobium etli (strain ATCC 51251 / DSM 11541 / JCM 21823 / NBRC 15573 / CFN 42).